A 371-amino-acid polypeptide reads, in one-letter code: Deoxyguanosinetriphosphate triphosphohydrolase-like protein (371 aa).

One can recognise an HD domain in the interval 62 to 200; that stretch reads RITHSIEVAQ…SAISDDIAYN (139 aa).

The protein belongs to the dGTPase family. Type 2 subfamily.

This is Deoxyguanosinetriphosphate triphosphohydrolase-like protein from Pelagibacter ubique (strain HTCC1062).